Reading from the N-terminus, the 714-residue chain is Calpain-1 catalytic subunit (714 aa).

Residues 55 to 354 (LFRDEAFPPV…FTRLEICNLT (300 aa)) enclose the Calpain catalytic domain. Residues glutamine 109 and aspartate 114 each coordinate Ca(2+). Active-site residues include cysteine 115, histidine 272, and asparagine 296. Ca(2+) contacts are provided by serine 316, aspartate 318, and glutamate 323. Threonine 354 carries the phosphothreonine modification. Positions 355-526 (PDALKSRTIR…KSAGTAELDD (172 aa)) are domain III. A linker region spans residues 527–542 (QIQANLPDEQVLSEEE). 4 consecutive EF-hand domains span residues 541-576 (EEIDENFKALFRQLAGEDMEISVKELRTILNRIISK), 585-618 (FSLESCRSMVNLMDRDGNGKLGLVEFNILWNRIR), 615-650 (NRIRNYLSIFRKFDLDKSGSMSAYEMRMAIESAGFK), and 680-714 (VRLETMFRFFKTLDTDLDGVVTFDLFKWLQLTMFA). A domain IV region spans residues 543-713 (IDENFKALFR…LFKWLQLTMF (171 aa)). Residues aspartate 598, aspartate 600, asparagine 602, lysine 604, glutamate 609, aspartate 628, aspartate 630, serine 632, serine 634, and glutamate 639 each coordinate Ca(2+).

It belongs to the peptidase C2 family. In terms of assembly, forms a heterodimer with a small (regulatory) subunit (CAPNS1). Ca(2+) serves as cofactor. Undergoes calcium-induced successive autoproteolytic cleavages that generate a membrane-bound 78 kDa active form and an intracellular 75 kDa active form. Calpastatin reduces with high efficiency the transition from 78 kDa to 75 kDa calpain forms. In terms of tissue distribution, ubiquitous.

It is found in the cytoplasm. It localises to the cell membrane. It carries out the reaction Broad endopeptidase specificity.. Its activity is regulated as follows. Activated by micromolar concentrations of calcium and inhibited by calpastatin. Its function is as follows. Calcium-regulated non-lysosomal thiol-protease which catalyze limited proteolysis of substrates involved in cytoskeletal remodeling and signal transduction. Proteolytically cleaves CTBP1. Cleaves and activates caspase-7 (CASP7). This is Calpain-1 catalytic subunit (CAPN1) from Macaca fascicularis (Crab-eating macaque).